Here is an 82-residue protein sequence, read N- to C-terminus: Cytotoxin 6 (82 aa).

An N-terminal signal peptide occupies residues Met1–Thr21. Intrachain disulfides connect Cys24/Cys42, Cys35/Cys59, Cys63/Cys74, and Cys75/Cys80.

The protein belongs to the three-finger toxin family. Short-chain subfamily. Type IA cytotoxin sub-subfamily. In terms of assembly, monomer in solution; Homodimer and oligomer in the presence of negatively charged lipids forming a pore with a size ranging between 20 and 30 Angstroms. Expressed by the venom gland.

It is found in the secreted. The protein resides in the target cell membrane. Its function is as follows. Shows cytolytic activity on many different cells by forming pore in lipid membranes. In vivo, increases heart rate or kills the animal by cardiac arrest. In addition, it binds to heparin with high affinity, interacts with Kv channel-interacting protein 1 (KCNIP1) in a calcium-independent manner, and binds to integrin alpha-V/beta-3 (ITGAV/ITGB3) with moderate affinity. In Naja atra (Chinese cobra), this protein is Cytotoxin 6.